Here is a 161-residue protein sequence, read N- to C-terminus: Regulator of ribonuclease activity A (161 aa).

This sequence belongs to the RraA family. Homotrimer. Binds to both RNA-binding sites in the C-terminal region of Rne and to RhlB.

Its subcellular location is the cytoplasm. In terms of biological role, globally modulates RNA abundance by binding to RNase E (Rne) and regulating its endonucleolytic activity. Can modulate Rne action in a substrate-dependent manner by altering the composition of the degradosome. Modulates RNA-binding and helicase activities of the degradosome. The polypeptide is Regulator of ribonuclease activity A (Citrobacter koseri (strain ATCC BAA-895 / CDC 4225-83 / SGSC4696)).